The following is a 197-amino-acid chain: Segregation and condensation protein B (197 aa).

Belongs to the ScpB family. As to quaternary structure, homodimer. Homodimerization may be required to stabilize the binding of ScpA to the Smc head domains. Component of a cohesin-like complex composed of ScpA, ScpB and the Smc homodimer, in which ScpA and ScpB bind to the head domain of Smc. The presence of the three proteins is required for the association of the complex with DNA.

The protein resides in the cytoplasm. In terms of biological role, participates in chromosomal partition during cell division. May act via the formation of a condensin-like complex containing Smc and ScpA that pull DNA away from mid-cell into both cell halves. This is Segregation and condensation protein B from Bacillus pumilus (strain SAFR-032).